The following is a 296-amino-acid chain: MELTVVQREILQELINLYREKNRPIKGTEIALRLNRNPGTIRNQMQALRALDLVDGVPGPKGGYVPTSKAYRALGLEDEGEIIVPIYKDGKKVEGVKVVKIEFDTVSHEKCCSSKIHIEGDTKHFNIGDIIRVGPTYHNKIIINGKIIGRDDIHRILLIDVLGVSSIPNIKVGDVGIKEVWTINPNCTLRETAKLFAEKYISGAPVVDNDKLVGVISLHDIAENIDNIDKKVKEVMRRDVITIHKDEKIYDALKIMNKNNVGRLVIVDDNNKIVGIITRTDILKIISGKFPENFHT.

CBS domains follow at residues 176-232 and 236-292; these read GIKE…DKKV and MRRD…KFPE.

This is an uncharacterized protein from Methanocaldococcus jannaschii (strain ATCC 43067 / DSM 2661 / JAL-1 / JCM 10045 / NBRC 100440) (Methanococcus jannaschii).